The following is a 463-amino-acid chain: MLSLFYQRISTYIKLSASSLLSILPLYRPFQRRRLTMPSNEGSISSSSTTRPKDVLVVGGSYSGLAAALNLLDLCQGRSCRFAGALDPEISEPAEMRERVPVQITIVDERDGYFHLIGTPLAFASEEYALSAWRKFADIPALQTPAIKFIQGSVTRVDCERKISTIKEAGTNNEISQKYDYLVASSGLRRTWPSAPQSLNKDKYLEEVGEHIAKIKMANGGVVVIGGGAVGIEMASELKEMHPDLRVTLIHSRAKLLSSEPLPDEFRDRALELLHETGVETILGSRVIRTTQTELNGAATPSYTLSLTDGRTIKAGYVINAISKYSPTTAYLPSSVLDKEGYVKVNSALNFTDEVPNAKYHFAAGDLALWSGIKRAGRAMHHGHYVGMNIYQQLLNERFGTKPKFSEMAHAPPSMAVAVGKNTVAYGTEQGVVSGEEIAKIFFEDDLGFGICWRYLKLGEAPK.

Residues 59-63, valine 154, and aspartate 366 contribute to the 6-hydroxy-FAD site; that span reads GGSYS.

This sequence belongs to the FAD-dependent oxidoreductase family. 6-hydroxy-FAD serves as cofactor.

Its pathway is siderophore biosynthesis. In terms of biological role, oxidoreductase; part of the gene cluster that mediates the biosynthesis of hydroxamate-containing siderophores that play a critical role in virulence via intracellular iron acquisition during macrophage infection. The protein is Oxidoreductase OXR1 of Ajellomyces capsulatus (Darling's disease fungus).